A 189-amino-acid polypeptide reads, in one-letter code: Small ribosomal subunit protein uS4 (189 aa).

Residues 107–178 (RRLQTQVFKL…AGRVKRKNQG (72 aa)) enclose the S4 RNA-binding domain. Residues 160 to 189 (HNSPYGGGRAGRVKRKNQGKGGEEGAEEEE) form a disordered region.

Belongs to the universal ribosomal protein uS4 family. Component of the small ribosomal subunit. Mature ribosomes consist of a small (40S) and a large (60S) subunit. The 40S subunit contains about 32 different proteins and 1 molecule of RNA (18S). The 60S subunit contains 45 different proteins and 3 molecules of RNA (25S, 5.8S and 5S).

Its subcellular location is the cytoplasm. In terms of biological role, component of the ribosome, a large ribonucleoprotein complex responsible for the synthesis of proteins in the cell. The small ribosomal subunit (SSU) binds messenger RNAs (mRNAs) and translates the encoded message by selecting cognate aminoacyl-transfer RNA (tRNA) molecules. The large subunit (LSU) contains the ribosomal catalytic site termed the peptidyl transferase center (PTC), which catalyzes the formation of peptide bonds, thereby polymerizing the amino acids delivered by tRNAs into a polypeptide chain. The nascent polypeptides leave the ribosome through a tunnel in the LSU and interact with protein factors that function in enzymatic processing, targeting, and the membrane insertion of nascent chains at the exit of the ribosomal tunnel. RPS9B is involved in nucleolar processing of pre-18S ribosomal RNA and ribosome assembly. The sequence is that of Small ribosomal subunit protein uS4 (RPS9B) from Candida albicans (strain SC5314 / ATCC MYA-2876) (Yeast).